We begin with the raw amino-acid sequence, 181 residues long: ATP-dependent protease subunit HslV (181 aa).

Threonine 6 is an active-site residue. 3 residues coordinate Na(+): alanine 162, cysteine 165, and threonine 168.

Belongs to the peptidase T1B family. HslV subfamily. As to quaternary structure, a double ring-shaped homohexamer of HslV is capped on each side by a ring-shaped HslU homohexamer. The assembly of the HslU/HslV complex is dependent on binding of ATP.

The protein resides in the cytoplasm. It catalyses the reaction ATP-dependent cleavage of peptide bonds with broad specificity.. Its activity is regulated as follows. Allosterically activated by HslU binding. Functionally, protease subunit of a proteasome-like degradation complex believed to be a general protein degrading machinery. The polypeptide is ATP-dependent protease subunit HslV (Solidesulfovibrio magneticus (strain ATCC 700980 / DSM 13731 / RS-1) (Desulfovibrio magneticus)).